The chain runs to 150 residues: Transcriptional repressor NrdR (150 aa).

A zinc finger spans residues 3 to 34 (CPFCNFSDSKVVDSRPDKGGAAIRRRRECESC). Residues 49–139 (PLVTKRDGRR…VYRSFKDINE (91 aa)) form the ATP-cone domain.

The protein belongs to the NrdR family. Zn(2+) is required as a cofactor.

In terms of biological role, negatively regulates transcription of bacterial ribonucleotide reductase nrd genes and operons by binding to NrdR-boxes. The chain is Transcriptional repressor NrdR from Citrifermentans bemidjiense (strain ATCC BAA-1014 / DSM 16622 / JCM 12645 / Bem) (Geobacter bemidjiensis).